The following is a 435-amino-acid chain: Serine hydroxymethyltransferase (435 aa).

(6S)-5,6,7,8-tetrahydrofolate contacts are provided by residues Leu133 and 137–139; that span reads GHL. Residue Lys242 is modified to N6-(pyridoxal phosphate)lysine.

It belongs to the SHMT family. In terms of assembly, homodimer. Requires pyridoxal 5'-phosphate as cofactor.

The protein localises to the cytoplasm. It carries out the reaction (6R)-5,10-methylene-5,6,7,8-tetrahydrofolate + glycine + H2O = (6S)-5,6,7,8-tetrahydrofolate + L-serine. Its pathway is one-carbon metabolism; tetrahydrofolate interconversion. It functions in the pathway amino-acid biosynthesis; glycine biosynthesis; glycine from L-serine: step 1/1. Its function is as follows. Catalyzes the reversible interconversion of serine and glycine with tetrahydrofolate (THF) serving as the one-carbon carrier. This reaction serves as the major source of one-carbon groups required for the biosynthesis of purines, thymidylate, methionine, and other important biomolecules. Also exhibits THF-independent aldolase activity toward beta-hydroxyamino acids, producing glycine and aldehydes, via a retro-aldol mechanism. The polypeptide is Serine hydroxymethyltransferase (Hyphomonas neptunium (strain ATCC 15444)).